The following is a 686-amino-acid chain: tRNA wybutosine-synthesizing protein 4 (686 aa).

A compositionally biased stretch (basic and acidic residues) spans 1–10 (MGPRSRERRA). A disordered region spans residues 1 to 21 (MGPRSRERRAGAVQNTNDSSA). Residues Arg-59, Gly-89, Asp-114, 161-162 (DL), and Glu-188 each bind S-adenosyl-L-methionine.

Belongs to the methyltransferase superfamily. LCMT family. In terms of assembly, interacts with RNF144B/IBRDC2.

It catalyses the reaction 7-[(3S)-3-amino-3-carboxypropyl]wyosine(37) in tRNA(Phe) + S-adenosyl-L-methionine = 7-[(3S)-(3-amino-3-methoxycarbonyl)propyl]wyosine(37) in tRNA(Phe) + S-adenosyl-L-homocysteine. The enzyme catalyses 7-[(3S)-(3-amino-3-methoxycarbonyl)propyl]wyosine(37) in tRNA(Phe) + S-adenosyl-L-methionine + CO2 = wybutosine(37) in tRNA(Phe) + S-adenosyl-L-homocysteine + 2 H(+). It participates in tRNA modification; wybutosine-tRNA(Phe) biosynthesis. In terms of biological role, probable S-adenosyl-L-methionine-dependent methyltransferase that acts as a component of the wybutosine biosynthesis pathway. Wybutosine is a hyper modified guanosine with a tricyclic base found at the 3'-position adjacent to the anticodon of eukaryotic phenylalanine tRNA. May methylate the carboxyl group of leucine residues to form alpha-leucine ester residues. The sequence is that of tRNA wybutosine-synthesizing protein 4 (LCMT2) from Homo sapiens (Human).